The chain runs to 269 residues: Formamidopyrimidine-DNA glycosylase (269 aa).

Proline 2 acts as the Schiff-base intermediate with DNA in catalysis. The active-site Proton donor is the glutamate 3. The Proton donor; for beta-elimination activity role is filled by lysine 57. Histidine 90, arginine 109, and lysine 150 together coordinate DNA. An FPG-type zinc finger spans residues 235 to 269 (QVYGRKGEPCRVCGTPIVASKHAQRATFYCRQCQK). The active-site Proton donor; for delta-elimination activity is arginine 259.

Belongs to the FPG family. As to quaternary structure, monomer. Zn(2+) is required as a cofactor.

It carries out the reaction Hydrolysis of DNA containing ring-opened 7-methylguanine residues, releasing 2,6-diamino-4-hydroxy-5-(N-methyl)formamidopyrimidine.. The enzyme catalyses 2'-deoxyribonucleotide-(2'-deoxyribose 5'-phosphate)-2'-deoxyribonucleotide-DNA = a 3'-end 2'-deoxyribonucleotide-(2,3-dehydro-2,3-deoxyribose 5'-phosphate)-DNA + a 5'-end 5'-phospho-2'-deoxyribonucleoside-DNA + H(+). In terms of biological role, involved in base excision repair of DNA damaged by oxidation or by mutagenic agents. Acts as a DNA glycosylase that recognizes and removes damaged bases. Has a preference for oxidized purines, such as 7,8-dihydro-8-oxoguanine (8-oxoG). Has AP (apurinic/apyrimidinic) lyase activity and introduces nicks in the DNA strand. Cleaves the DNA backbone by beta-delta elimination to generate a single-strand break at the site of the removed base with both 3'- and 5'-phosphates. This Enterobacter sp. (strain 638) protein is Formamidopyrimidine-DNA glycosylase.